The primary structure comprises 258 residues: UPF0758 protein Bamb_2548 (258 aa).

Residues 1–43 are disordered; that stretch reads MLSPCLAAPATECRDPADAPAAPARHTGPARPRKRRPRNWKPH. The segment covering 31–43 has biased composition (basic residues); that stretch reads RPRKRRPRNWKPH. Residues 136-258 enclose the MPN domain; that stretch reads QIDSPGAVED…TFSFARAGWL (123 aa). 3 residues coordinate Zn(2+): His207, His209, and Asp220. The JAMM motif signature appears at 207 to 220; the sequence is HNHPSGAVQPSAED.

The protein belongs to the UPF0758 family.

The sequence is that of UPF0758 protein Bamb_2548 from Burkholderia ambifaria (strain ATCC BAA-244 / DSM 16087 / CCUG 44356 / LMG 19182 / AMMD) (Burkholderia cepacia (strain AMMD)).